Reading from the N-terminus, the 201-residue chain is Small ribosomal subunit protein uS4 (201 aa).

One can recognise an S4 RNA-binding domain in the interval 93-156 (RRLDNMVYRL…KNLDIIKNAV (64 aa)).

This sequence belongs to the universal ribosomal protein uS4 family. As to quaternary structure, part of the 30S ribosomal subunit. Contacts protein S5. The interaction surface between S4 and S5 is involved in control of translational fidelity.

In terms of biological role, one of the primary rRNA binding proteins, it binds directly to 16S rRNA where it nucleates assembly of the body of the 30S subunit. With S5 and S12 plays an important role in translational accuracy. The protein is Small ribosomal subunit protein uS4 of Limosilactobacillus reuteri subsp. reuteri (strain JCM 1112) (Lactobacillus reuteri).